A 159-amino-acid polypeptide reads, in one-letter code: Transcription antitermination protein NusB (159 aa).

It belongs to the NusB family.

In terms of biological role, involved in transcription antitermination. Required for transcription of ribosomal RNA (rRNA) genes. Binds specifically to the boxA antiterminator sequence of the ribosomal RNA (rrn) operons. This is Transcription antitermination protein NusB from Xanthomonas campestris pv. campestris (strain 8004).